Reading from the N-terminus, the 389-residue chain is Probable acyl-CoA dehydrogenase fadE25 (389 aa).

Belongs to the acyl-CoA dehydrogenase family. It depends on FAD as a cofactor.

It carries out the reaction a 2,3-saturated acyl-CoA + A = a 2,3-dehydroacyl-CoA + AH2. This chain is Probable acyl-CoA dehydrogenase fadE25 (fadE25), found in Mycobacterium bovis (strain ATCC BAA-935 / AF2122/97).